A 581-amino-acid chain; its full sequence is Arginine--tRNA ligase (581 aa).

A 'HIGH' region motif is present at residues 126–136 (PNLAKEMHVGH).

This sequence belongs to the class-I aminoacyl-tRNA synthetase family. Monomer.

Its subcellular location is the cytoplasm. It carries out the reaction tRNA(Arg) + L-arginine + ATP = L-arginyl-tRNA(Arg) + AMP + diphosphate. The chain is Arginine--tRNA ligase from Shewanella woodyi (strain ATCC 51908 / MS32).